A 403-amino-acid chain; its full sequence is Phosphopentomutase (403 aa).

Residues aspartate 13, aspartate 298, histidine 303, aspartate 339, histidine 340, and histidine 351 each contribute to the Mn(2+) site.

The protein belongs to the phosphopentomutase family. It depends on Mn(2+) as a cofactor.

The protein resides in the cytoplasm. It catalyses the reaction 2-deoxy-alpha-D-ribose 1-phosphate = 2-deoxy-D-ribose 5-phosphate. The catalysed reaction is alpha-D-ribose 1-phosphate = D-ribose 5-phosphate. It functions in the pathway carbohydrate degradation; 2-deoxy-D-ribose 1-phosphate degradation; D-glyceraldehyde 3-phosphate and acetaldehyde from 2-deoxy-alpha-D-ribose 1-phosphate: step 1/2. In terms of biological role, isomerase that catalyzes the conversion of deoxy-ribose 1-phosphate (dRib-1-P) and ribose 1-phosphate (Rib-1-P) to deoxy-ribose 5-phosphate (dRib-5-P) and ribose 5-phosphate (Rib-5-P), respectively. The sequence is that of Phosphopentomutase from Streptococcus gordonii (strain Challis / ATCC 35105 / BCRC 15272 / CH1 / DL1 / V288).